The following is a 712-amino-acid chain: Amino-acid acetyltransferase, mitochondrial (712 aa).

A mitochondrion-targeting transit peptide spans 1-47; sequence MFVRTCRSSCNAWTNATSTTQAGSLLPPNAHRSVVLTLSLQACSART. The segment at 55–99 is disordered; that stretch reads FASTTSQSKRQEAEAEEKRQVSPRLGPSAPRSSYPSSAEARQKRD. Positions 63-74 are enriched in basic and acidic residues; it reads KRQEAEAEEKRQ. Positions 81–93 are enriched in low complexity; sequence PSAPRSSYPSSAE. The N-acetyltransferase domain maps to 534–702; the sequence is GVPRLRLTDT…YEDVCRNIAP (169 aa).

This sequence belongs to the acetyltransferase family.

The protein resides in the mitochondrion. The catalysed reaction is L-glutamate + acetyl-CoA = N-acetyl-L-glutamate + CoA + H(+). It functions in the pathway amino-acid biosynthesis; L-arginine biosynthesis; N(2)-acetyl-L-ornithine from L-glutamate: step 1/4. Inhibited by arginine. Functionally, N-acetylglutamate synthase involved in arginine biosynthesis. In Neurospora crassa (strain ATCC 24698 / 74-OR23-1A / CBS 708.71 / DSM 1257 / FGSC 987), this protein is Amino-acid acetyltransferase, mitochondrial (arg-14).